We begin with the raw amino-acid sequence, 373 residues long: mRNA export factor rae-1 (373 aa).

The residue at position 1 (Met1) is an N-acetylmethionine. WD repeat units lie at residues 40-82 (APED…TFEG), 87-126 (NIPAPILDIAWIEDSSKIFIACADKEARLWDLASNQVAVV), 128-169 (THDG…NQTQ), and 276-315 (QEIYAVNDICFHPQHGTLVTIGSDGRYSMWDKDARTKLKT).

It belongs to the WD repeat rae1 family. The nuclear pore complex (NPC) constitutes the exclusive means of nucleocytoplasmic transport. NPCs allow the passive diffusion of ions and small molecules and the active, nuclear transport receptor-mediated bidirectional transport of macromolecules such as proteins, RNAs, ribonucleoparticles (RNPs), and ribosomal subunits across the nuclear envelope. Interacts with rpm-1. As to expression, expressed along the ventral and dorsal nerve cords.

It is found in the nucleus. The protein localises to the nuclear pore complex. Its subcellular location is the cell projection. It localises to the axon. The protein resides in the synapse. In terms of biological role, functions as a component of the nuclear pore complex (NPC). NPC components, collectively referred to as nucleoporins (NUPs), can play the role of both NPC structural components and of docking or interaction partners for transiently associated nuclear transport factors. It is specifically important for nuclear mRNA export. Has a role in neuronal development, where it acts downstream of rpm-1 to control axon termination and synapse formation in anterior lateral microtubule (ALM) and posterior lateral microtubule (PLM) mechanosensory neurons. In Caenorhabditis elegans, this protein is mRNA export factor rae-1.